Here is a 346-residue protein sequence, read N- to C-terminus: Putative agmatine deiminase (346 aa).

Cys333 functions as the Amidino-cysteine intermediate in the catalytic mechanism.

Belongs to the agmatine deiminase family.

The enzyme catalyses agmatine + H2O = N-carbamoylputrescine + NH4(+). The polypeptide is Putative agmatine deiminase (Legionella pneumophila (strain Paris)).